The sequence spans 276 residues: Elongation factor Ts, mitochondrial (276 aa).

This sequence belongs to the EF-Ts family.

It is found in the mitochondrion. Functionally, associates with the EF-Tu.GDP complex and induces the exchange of GDP to GTP. It remains bound to the aminoacyl-tRNA.EF-Tu.GTP complex up to the GTP hydrolysis stage on the ribosome. The protein is Elongation factor Ts, mitochondrial of Leishmania major.